The following is an 87-amino-acid chain: uncharacterized protein (87 aa).

This is an uncharacterized protein from Ureaplasma parvum serovar 3 (strain ATCC 700970).